Consider the following 295-residue polypeptide: Ethanolamine ammonia-lyase small subunit (295 aa).

Adenosylcob(III)alamin contacts are provided by V209 and E230.

It belongs to the EutC family. As to quaternary structure, the basic unit is a heterodimer which dimerizes to form tetramers. The heterotetramers trimerize; 6 large subunits form a core ring with 6 small subunits projecting outwards. Adenosylcob(III)alamin serves as cofactor.

It localises to the bacterial microcompartment. The catalysed reaction is ethanolamine = acetaldehyde + NH4(+). It participates in amine and polyamine degradation; ethanolamine degradation. Its function is as follows. Catalyzes the deamination of various vicinal amino-alcohols to oxo compounds. Allows this organism to utilize ethanolamine as the sole source of nitrogen and carbon in the presence of external vitamin B12. The sequence is that of Ethanolamine ammonia-lyase small subunit from Clostridium perfringens (strain ATCC 13124 / DSM 756 / JCM 1290 / NCIMB 6125 / NCTC 8237 / Type A).